We begin with the raw amino-acid sequence, 418 residues long: Gamma-glutamyl phosphate reductase (418 aa).

Belongs to the gamma-glutamyl phosphate reductase family.

The protein resides in the cytoplasm. The catalysed reaction is L-glutamate 5-semialdehyde + phosphate + NADP(+) = L-glutamyl 5-phosphate + NADPH + H(+). It functions in the pathway amino-acid biosynthesis; L-proline biosynthesis; L-glutamate 5-semialdehyde from L-glutamate: step 2/2. Its function is as follows. Catalyzes the NADPH-dependent reduction of L-glutamate 5-phosphate into L-glutamate 5-semialdehyde and phosphate. The product spontaneously undergoes cyclization to form 1-pyrroline-5-carboxylate. This Geotalea daltonii (strain DSM 22248 / JCM 15807 / FRC-32) (Geobacter daltonii) protein is Gamma-glutamyl phosphate reductase.